A 562-amino-acid chain; its full sequence is NAD-dependent malic enzyme (562 aa).

Residue tyrosine 101 is the Proton donor of the active site. Arginine 154 contributes to the NAD(+) binding site. The Proton acceptor role is filled by lysine 172. Positions 243, 244, and 267 each coordinate a divalent metal cation. NAD(+) contacts are provided by aspartate 267 and asparagine 415.

It belongs to the malic enzymes family. In terms of assembly, homotetramer. It depends on Mg(2+) as a cofactor. Requires Mn(2+) as cofactor.

It catalyses the reaction (S)-malate + NAD(+) = pyruvate + CO2 + NADH. The enzyme catalyses oxaloacetate + H(+) = pyruvate + CO2. This chain is NAD-dependent malic enzyme, found in Shewanella sp. (strain MR-4).